We begin with the raw amino-acid sequence, 816 residues long: Ribonucleoside-diphosphate reductase large subunit (816 aa).

The region spanning 1–92 (MYVVKRDGRQ…VSNLHKNTKK (92 aa)) is the ATP-cone domain. ATP contacts are provided by residues 5 to 6 (KR), 11 to 17 (ETVHFDK), T53, and D57. 2 residues coordinate GDP: S202 and S217. C218 and C444 are joined by a disulfide. Residues 226–228 (DSI), K243, R256, and 263–264 (RG) contribute to the dTTP site. N427 lines the GDP pocket. The Proton acceptor role is filled by N427. C429 serves as the catalytic Cysteine radical intermediate. GDP-binding positions include E431 and 623-626 (TAST). The active-site Proton acceptor is the E431.

The protein belongs to the ribonucleoside diphosphate reductase large chain family. As to quaternary structure, heterotetramer of two large/R1 and two small/R2 subunits. A radical transfer pathway may occur between 'Tyr-125' of protein R2 and R1. In terms of processing, contains a disulfide bonds. Binding of the substrate occurs primarily when the active-site cysteines are reduced. As to expression, highly expressed in actively growing tissues such as young leaves, shoot apices, inflorescences and carpels. Very low expression in cotyledons, adult and cauline leaves and senescent leaves.

It is found in the cytoplasm. The catalysed reaction is a 2'-deoxyribonucleoside 5'-diphosphate + [thioredoxin]-disulfide + H2O = a ribonucleoside 5'-diphosphate + [thioredoxin]-dithiol. With respect to regulation, under complex allosteric control mediated by deoxynucleoside triphosphates and ATP binding to separate specificity and activation sites on the large subunit. The type of nucleotide bound at the specificity site determines substrate preference. It seems probable that ATP makes the enzyme reduce CDP and UDP, dGTP favors ADP reduction and dTTP favors GDP reduction. Stimulated by ATP and inhibited by dATP binding to the activity site. In terms of biological role, provides the precursors necessary for DNA synthesis. Catalyzes the biosynthesis of deoxyribonucleotides from the corresponding ribonucleotides. R1 contains the binding sites for both substrates and allosteric effectors and carries out the actual reduction of the ribonucleotide. Ribonucleotide reductase (RNR) complex function is essential for efficient organellar DNA degradation in pollen. Involved in chloroplast division. This Arabidopsis thaliana (Mouse-ear cress) protein is Ribonucleoside-diphosphate reductase large subunit.